The following is a 248-amino-acid chain: Ubiquinone biosynthesis O-methyltransferase (248 aa).

S-adenosyl-L-methionine is bound by residues arginine 41, glycine 72, aspartate 93, and methionine 136.

Belongs to the methyltransferase superfamily. UbiG/COQ3 family.

The catalysed reaction is a 3-demethylubiquinol + S-adenosyl-L-methionine = a ubiquinol + S-adenosyl-L-homocysteine + H(+). It catalyses the reaction a 3-(all-trans-polyprenyl)benzene-1,2-diol + S-adenosyl-L-methionine = a 2-methoxy-6-(all-trans-polyprenyl)phenol + S-adenosyl-L-homocysteine + H(+). It functions in the pathway cofactor biosynthesis; ubiquinone biosynthesis. In terms of biological role, O-methyltransferase that catalyzes the 2 O-methylation steps in the ubiquinone biosynthetic pathway. The protein is Ubiquinone biosynthesis O-methyltransferase of Brucella melitensis biotype 2 (strain ATCC 23457).